We begin with the raw amino-acid sequence, 180 residues long: Large ribosomal subunit protein uL5 (180 aa).

It belongs to the universal ribosomal protein uL5 family. In terms of assembly, part of the 50S ribosomal subunit; part of the 5S rRNA/L5/L18/L25 subcomplex. Contacts the 5S rRNA and the P site tRNA. Forms a bridge to the 30S subunit in the 70S ribosome.

Functionally, this is one of the proteins that bind and probably mediate the attachment of the 5S RNA into the large ribosomal subunit, where it forms part of the central protuberance. In the 70S ribosome it contacts protein S13 of the 30S subunit (bridge B1b), connecting the 2 subunits; this bridge is implicated in subunit movement. Contacts the P site tRNA; the 5S rRNA and some of its associated proteins might help stabilize positioning of ribosome-bound tRNAs. This is Large ribosomal subunit protein uL5 from Anaeromyxobacter sp. (strain Fw109-5).